The sequence spans 294 residues: N-acetylmuramic acid 6-phosphate etherase (294 aa).

The SIS domain maps to 56–219 (TSYSLRNGGR…STLSMVSVGK (164 aa)). Residue glutamate 84 is the Proton donor of the active site. Glutamate 115 is a catalytic residue.

The protein belongs to the GCKR-like family. MurNAc-6-P etherase subfamily. In terms of assembly, homodimer.

The catalysed reaction is N-acetyl-D-muramate 6-phosphate + H2O = N-acetyl-D-glucosamine 6-phosphate + (R)-lactate. It participates in amino-sugar metabolism; 1,6-anhydro-N-acetylmuramate degradation. Its pathway is amino-sugar metabolism; N-acetylmuramate degradation. It functions in the pathway cell wall biogenesis; peptidoglycan recycling. In terms of biological role, specifically catalyzes the cleavage of the D-lactyl ether substituent of MurNAc 6-phosphate, producing GlcNAc 6-phosphate and D-lactate. Together with AnmK, is also required for the utilization of anhydro-N-acetylmuramic acid (anhMurNAc) either imported from the medium or derived from its own cell wall murein, and thus plays a role in cell wall recycling. In Francisella tularensis subsp. tularensis (strain SCHU S4 / Schu 4), this protein is N-acetylmuramic acid 6-phosphate etherase.